The sequence spans 322 residues: Deoxyhypusine hydroxylase (322 aa).

4 HEAT-like PBS-type repeats span residues 76 to 102, 109 to 135, 234 to 260, and 267 to 293; these read LKHEVAYVLGQTGNLACAATLREVMLD, VRHEASEALGALGDAASLGALERSRRE, FKHEIAYVFGQIGNPCVVPHLQEVLKR, and VRHEAAEALGSIATDDVLPVLKRHLQD. Residues H78, E79, H111, E112, H236, E237, H269, and E270 each coordinate Fe cation.

This sequence belongs to the deoxyhypusine hydroxylase family. It depends on Fe(2+) as a cofactor.

It localises to the cytoplasm. The protein resides in the nucleus. It carries out the reaction [eIF5A protein]-deoxyhypusine + AH2 + O2 = [eIF5A protein]-hypusine + A + H2O. Its pathway is protein modification; eIF5A hypusination. Functionally, catalyzes the hydroxylation of the N(6)-(4-aminobutyl)-L-lysine intermediate to form hypusine, an essential post-translational modification only found in mature eIF-5A factor. This is Deoxyhypusine hydroxylase from Eremothecium gossypii (strain ATCC 10895 / CBS 109.51 / FGSC 9923 / NRRL Y-1056) (Yeast).